The primary structure comprises 203 residues: LexA repressor (203 aa).

A DNA-binding region (H-T-H motif) is located at residues 29–49 (VREIGQEVGLSSSSTVHGYLK). Active-site for autocatalytic cleavage activity residues include serine 126 and lysine 163.

The protein belongs to the peptidase S24 family. Homodimer.

It carries out the reaction Hydrolysis of Ala-|-Gly bond in repressor LexA.. In terms of biological role, represses a number of genes involved in the response to DNA damage (SOS response), including recA and lexA. In the presence of single-stranded DNA, RecA interacts with LexA causing an autocatalytic cleavage which disrupts the DNA-binding part of LexA, leading to derepression of the SOS regulon and eventually DNA repair. This is LexA repressor from Pelotomaculum thermopropionicum (strain DSM 13744 / JCM 10971 / SI).